Here is a 168-residue protein sequence, read N- to C-terminus: Signal peptidase I V (168 aa).

At 1–6 (MKKRFW) the chain is on the cytoplasmic side. A helical transmembrane segment spans residues 7 to 26 (FLAGVVSVVLAIQVKNAVFI). The Extracellular portion of the chain corresponds to 27–168 (DYKVEGVSMN…NIVGVISDAE (142 aa)). Active-site residues include Ser34 and Lys75.

It belongs to the peptidase S26 family.

It is found in the cell membrane. It catalyses the reaction Cleavage of hydrophobic, N-terminal signal or leader sequences from secreted and periplasmic proteins.. This Bacillus subtilis (strain 168) protein is Signal peptidase I V (sipV).